The sequence spans 245 residues: PF03932 family protein CutC (245 aa).

It belongs to the CutC family.

The protein localises to the cytoplasm. This Sinorhizobium medicae (strain WSM419) (Ensifer medicae) protein is PF03932 family protein CutC.